A 369-amino-acid chain; its full sequence is Protein arginine N-methyltransferase 1-A (369 aa).

Positions K48–R369 constitute an SAM-dependent MTase PRMT-type domain. The S-adenosyl-L-methionine site is built by H61, R70, G94, E116, and E145. Residues E160 and E169 contribute to the active site.

This sequence belongs to the class I-like SAM-binding methyltransferase superfamily. Protein arginine N-methyltransferase family. As to quaternary structure, homodimer. Homooctamer; individual homodimers associates to form a homooctamer and homooligomerization is required for proper localization to the cell membrane. Individual homodimers can associate to form a homohexamer. Component of a complex with lsm14a/rap55a. Interacts with cirbp.

It is found in the nucleus. The protein localises to the nucleoplasm. The protein resides in the cytoplasm. Its subcellular location is the cytosol. The catalysed reaction is L-arginyl-[protein] + 2 S-adenosyl-L-methionine = N(omega),N(omega)-dimethyl-L-arginyl-[protein] + 2 S-adenosyl-L-homocysteine + 2 H(+). It carries out the reaction L-arginyl-[protein] + S-adenosyl-L-methionine = N(omega)-methyl-L-arginyl-[protein] + S-adenosyl-L-homocysteine + H(+). It catalyses the reaction N(omega)-methyl-L-arginyl-[protein] + S-adenosyl-L-methionine = N(omega),N(omega)-dimethyl-L-arginyl-[protein] + S-adenosyl-L-homocysteine + H(+). In terms of biological role, arginine methyltransferase that methylates (mono and asymmetric dimethylation) the guanidino nitrogens of arginyl residues present in target proteins. Constitutes the main enzyme that mediates monomethylation and asymmetric dimethylation of histone H4 'Arg-4' (H4R3me1 and H4R3me2a, respectively), a specific tag for epigenetic transcriptional activation. Methylates cirbp to regulate its subcellular location. Acts transiently during metamorphosis as a transcription coactivator, enhancing thyroid hormone (T3) receptor (TR)-mediated transcription by enhancing TR binding to the T3 response element (TRE), and histone modification through recruitment of other coactivators. This chain is Protein arginine N-methyltransferase 1-A (prmt1-a), found in Xenopus laevis (African clawed frog).